A 315-amino-acid polypeptide reads, in one-letter code: 3-chlorobenzoate-3,4-dioxygenase reductase subunit (315 aa).

M1–R103 contributes to the FMN binding site. The 103-residue stretch at H7–D109 folds into the FAD-binding FR-type domain. Positions N228 to L315 constitute a 2Fe-2S ferredoxin-type domain. Positions 264, 269, 272, and 302 each coordinate [2Fe-2S] cluster.

It belongs to the PDR/VanB family. As to quaternary structure, this dioxygenase system consists of two proteins: phthalate oxygenase and phthalate oxygenase reductase. It depends on FMN as a cofactor.

This Comamonas testosteroni (Pseudomonas testosteroni) protein is 3-chlorobenzoate-3,4-dioxygenase reductase subunit (cbaB).